Reading from the N-terminus, the 93-residue chain is MATFKKFNKDKRPKRNTQSLLFKRKRFCRFTVAGVEEIDYKDVDTLRDFIAENGKIIPARLTGTRAIYQRQLNTAIKRARFLALLPYSDQHKI.

This sequence belongs to the bacterial ribosomal protein bS18 family. As to quaternary structure, part of the 30S ribosomal subunit. Forms a tight heterodimer with protein bS6.

In terms of biological role, binds as a heterodimer with protein bS6 to the central domain of the 16S rRNA, where it helps stabilize the platform of the 30S subunit. In Acidovorax ebreus (strain TPSY) (Diaphorobacter sp. (strain TPSY)), this protein is Small ribosomal subunit protein bS18.